The following is a 242-amino-acid chain: Phosphate import ATP-binding protein PstB 1 (242 aa).

Positions 1 to 237 constitute an ABC transporter domain; the sequence is MDLYYGSYRA…PKDQRTEDYI (237 aa). 28 to 35 contacts ATP; that stretch reads GPSGCGKS.

The protein belongs to the ABC transporter superfamily. Phosphate importer (TC 3.A.1.7) family. The complex is composed of two ATP-binding proteins (PstB), two transmembrane proteins (PstC and PstA) and a solute-binding protein (PstS).

The protein resides in the cell membrane. It catalyses the reaction phosphate(out) + ATP + H2O = ADP + 2 phosphate(in) + H(+). Its function is as follows. Part of the ABC transporter complex PstSACB involved in phosphate import. Responsible for energy coupling to the transport system. This is Phosphate import ATP-binding protein PstB 1 from Symbiobacterium thermophilum (strain DSM 24528 / JCM 14929 / IAM 14863 / T).